The sequence spans 239 residues: Large ribosomal subunit protein uL3 (239 aa).

Gln151 carries the N5-methylglutamine modification.

The protein belongs to the universal ribosomal protein uL3 family. As to quaternary structure, part of the 50S ribosomal subunit. Forms a cluster with proteins L14 and L19. Methylated by PrmB.

One of the primary rRNA binding proteins, it binds directly near the 3'-end of the 23S rRNA, where it nucleates assembly of the 50S subunit. This Ruegeria sp. (strain TM1040) (Silicibacter sp.) protein is Large ribosomal subunit protein uL3.